Reading from the N-terminus, the 138-residue chain is Large ribosomal subunit protein mL43 (138 aa).

It belongs to the mitochondrion-specific ribosomal protein mL43 family. In terms of assembly, component of the mitochondrial large ribosomal subunit (mt-LSU). Mature N.crassa 74S mitochondrial ribosomes consist of a small (37S) and a large (54S) subunit. The 37S small subunit contains a 16S ribosomal RNA (16S mt-rRNA) and 32 different proteins. The 54S large subunit contains a 23S rRNA (23S mt-rRNA) and 42 different proteins.

The protein resides in the mitochondrion. Functionally, component of the mitochondrial ribosome (mitoribosome), a dedicated translation machinery responsible for the synthesis of mitochondrial genome-encoded proteins, including at least some of the essential transmembrane subunits of the mitochondrial respiratory chain. The mitoribosomes are attached to the mitochondrial inner membrane and translation products are cotranslationally integrated into the membrane. In Neurospora crassa (strain ATCC 24698 / 74-OR23-1A / CBS 708.71 / DSM 1257 / FGSC 987), this protein is Large ribosomal subunit protein mL43 (mrpl51).